Here is a 205-residue protein sequence, read N- to C-terminus: Large ribosomal subunit protein uL4 (205 aa).

Positions 44 to 79 (RAGTKAQKTRREVSGGGAKPWRQKGTGRARAGSSRS) are disordered.

It belongs to the universal ribosomal protein uL4 family. As to quaternary structure, part of the 50S ribosomal subunit.

In terms of biological role, one of the primary rRNA binding proteins, this protein initially binds near the 5'-end of the 23S rRNA. It is important during the early stages of 50S assembly. It makes multiple contacts with different domains of the 23S rRNA in the assembled 50S subunit and ribosome. Forms part of the polypeptide exit tunnel. The protein is Large ribosomal subunit protein uL4 of Coxiella burnetii (strain RSA 331 / Henzerling II).